The primary structure comprises 347 residues: MLNSHSITIAIDAMGGDYGPSVVVPGAVKAAQITGAKIILVGNTPEIEDQLALLQVKNTKIEIVHASDVANMDEKPSDILRRKKNSSIQIACRLVKEGLANGIVSAGHSGASVACGMFIIGRITGVERPALASILPTEKNPLILLDVGATVDCKPYHLFQFGLMGHTFACDLLNIQSPRVGILSIGEEEGKGNTQVKEAYELLKMAKDINFTGNVEGRDLFTGNVDVTICDGFVGNVALKLSEGLSSSLSRVLRKELFSSGIFSKIGTFLAKNAFKNFSKLIDYAEYGGAPLLGLKGIFIVSHGSSNEKAICNATKMAVLFEQKETNKRLIDSIGLNEELTRFGHSC.

This sequence belongs to the PlsX family. As to quaternary structure, homodimer. Probably interacts with PlsY.

The protein resides in the cytoplasm. The catalysed reaction is a fatty acyl-[ACP] + phosphate = an acyl phosphate + holo-[ACP]. It participates in lipid metabolism; phospholipid metabolism. In terms of biological role, catalyzes the reversible formation of acyl-phosphate (acyl-PO(4)) from acyl-[acyl-carrier-protein] (acyl-ACP). This enzyme utilizes acyl-ACP as fatty acyl donor, but not acyl-CoA. This is Phosphate acyltransferase from Lawsonia intracellularis (strain PHE/MN1-00).